The following is a 1408-amino-acid chain: DNA-directed RNA polymerase subunit beta' (1408 aa).

Residues C70, C72, C85, and C88 each coordinate Zn(2+). 3 residues coordinate Mg(2+): D460, D462, and D464. C822, C896, C903, and C906 together coordinate Zn(2+). A disordered region spans residues 1386–1408 (DTGEAPPLSEEETGEIRNSGYAV).

The protein belongs to the RNA polymerase beta' chain family. The RNAP catalytic core consists of 2 alpha, 1 beta, 1 beta' and 1 omega subunit. When a sigma factor is associated with the core the holoenzyme is formed, which can initiate transcription. Requires Mg(2+) as cofactor. Zn(2+) serves as cofactor.

The enzyme catalyses RNA(n) + a ribonucleoside 5'-triphosphate = RNA(n+1) + diphosphate. Its function is as follows. DNA-dependent RNA polymerase catalyzes the transcription of DNA into RNA using the four ribonucleoside triphosphates as substrates. The chain is DNA-directed RNA polymerase subunit beta' from Nitrosospira multiformis (strain ATCC 25196 / NCIMB 11849 / C 71).